Consider the following 359-residue polypeptide: Transcription factor MYB115 (359 aa).

Residues 1–17 are compositionally biased toward polar residues; that stretch reads MYHQNLISSTPNQNSNP. Residues 1–21 form a disordered region; that stretch reads MYHQNLISSTPNQNSNPHDWD. HTH myb-type domains follow at residues 153–208 and 209–259; these read KDII…RPNI and KKND…RRLH. 2 DNA-binding regions (H-T-H motif) span residues 181 to 204 and 232 to 255; these read WTSI…HNHL and WTEI…NATK.

Accumulates in reproductive organs (e.g. flowers and siliques). Expressed at very low levels in vegetative organs.

It localises to the nucleus. Functionally, transcription activator that recognizes the motif 5'-TAACGG-3' in the promoter of target genes. Promotes vegetative-to-embryonic transition and the formation of somatic embryos from root explants in a WUS-independent manner. Together with MYB118, activates the transcription of S-ACP-DES2/AAD2 and S-ACP-DES3/AAD3 thus promoting the biosynthesis of omega-7 monounsaturated fatty acid in seed endosperm. This is Transcription factor MYB115 from Arabidopsis thaliana (Mouse-ear cress).